Reading from the N-terminus, the 351-residue chain is Methionine import ATP-binding protein MetN (351 aa).

The 246-residue stretch at 4–249 (VQLDHVSVTF…PKAELTQKFV (246 aa)) folds into the ABC transporter domain. Residue 41 to 48 (GFSGAGKS) coordinates ATP.

This sequence belongs to the ABC transporter superfamily. Methionine importer (TC 3.A.1.24) family. In terms of assembly, the complex is composed of two ATP-binding proteins (MetN), two transmembrane proteins (MetI) and a solute-binding protein (MetQ).

It is found in the cell membrane. It carries out the reaction L-methionine(out) + ATP + H2O = L-methionine(in) + ADP + phosphate + H(+). The enzyme catalyses D-methionine(out) + ATP + H2O = D-methionine(in) + ADP + phosphate + H(+). Its function is as follows. Part of the ABC transporter complex MetNIQ involved in methionine import. Responsible for energy coupling to the transport system. In Lactobacillus delbrueckii subsp. bulgaricus (strain ATCC 11842 / DSM 20081 / BCRC 10696 / JCM 1002 / NBRC 13953 / NCIMB 11778 / NCTC 12712 / WDCM 00102 / Lb 14), this protein is Methionine import ATP-binding protein MetN.